Consider the following 238-residue polypeptide: MQHSKSYRKAAAAIDRSKLYTPAEAVKLAKETTSVKFDATVEVAMRLGVDPRKADQMVRGTVNLPHGTGKTARVIVFAAGAKAEEAVAAGADEVGTDELVARIQGGWLEFDAAIATPDQMAKIGRIARILGPRGLMPNPKTGTVTMNVAKAVSDIKGGKIAFRVDKHSNLHLIIGKASFSEAQLVDNYAAVLDEVLRAKPSAAKGKYLKKVTLTTTMGPGVPVDPNVVKNLQEGSAEG.

The protein belongs to the universal ribosomal protein uL1 family. In terms of assembly, part of the 50S ribosomal subunit.

In terms of biological role, binds directly to 23S rRNA. The L1 stalk is quite mobile in the ribosome, and is involved in E site tRNA release. Protein L1 is also a translational repressor protein, it controls the translation of the L11 operon by binding to its mRNA. The sequence is that of Large ribosomal subunit protein uL1 from Salinispora arenicola (strain CNS-205).